Reading from the N-terminus, the 98-residue chain is Large ribosomal subunit protein uL23 (98 aa).

It belongs to the universal ribosomal protein uL23 family. In terms of assembly, part of the 50S ribosomal subunit. Contacts protein L29, and trigger factor when it is bound to the ribosome.

In terms of biological role, one of the early assembly proteins it binds 23S rRNA. One of the proteins that surrounds the polypeptide exit tunnel on the outside of the ribosome. Forms the main docking site for trigger factor binding to the ribosome. This is Large ribosomal subunit protein uL23 from Rickettsia akari (strain Hartford).